The chain runs to 952 residues: Probable mixed-linked glucan synthase 6 (952 aa).

Transmembrane regions (helical) follow at residues 102–122 and 132–152; these read LLHP…LFVI and AMWL…SWLL. Residue D227 is part of the active site. A coiled-coil region spans residues 278-308; it reads EEFVNDRRRVRKEYDDFKARINGLEHDIKQR. Residues D429 and D431 each coordinate substrate. D636 is a catalytic residue. Helical transmembrane passes span 718–738, 744–764, 782–802, 834–854, 865–885, and 898–918; these read LFLI…HFIV, MFYV…VLEV, MTAS…KVVF, WLMI…AVAF, WLKV…LYPF, and VVVL…YINI.

This sequence belongs to the glycosyltransferase 2 family. Plant cellulose synthase-like F subfamily.

It localises to the golgi apparatus membrane. Its function is as follows. May catalyze both beta-1,3 and beta-1,4 glycosidic linkage on beta-D-glucan. Essential for (1,3;1,4)-beta-D-glucans synthesis in grasses and cereals (Poaceae). The mixed-linked glucans (which are not present in walls of dicotyledons or most other monocotyledonous plants) are particularly important constituents of the walls of the starchy endosperm and aleurone cells of cereal grains such as oats, wheat, rice and barley. They can account for up to 70% by weight of the wall. The protein is Probable mixed-linked glucan synthase 6 (CSLF6) of Oryza sativa subsp. japonica (Rice).